The following is a 638-amino-acid chain: LEAF RUST 10 DISEASE-RESISTANCE LOCUS RECEPTOR-LIKE PROTEIN KINASE-like 2.1 (638 aa).

The signal sequence occupies residues 1 to 29 (MINLSLYQTNSLSYTIIWMLFVIPSCVLS). Topologically, residues 30–264 (VDERQKHCSP…EHTCGKMGIG (235 aa)) are extracellular. N-linked (GlcNAc...) asparagine glycosylation is found at Asn69, Asn114, Asn136, Asn204, and Asn239. The helical transmembrane segment at 265–285 (IGLGCGFLGATLITVCLLCFF) threads the bilayer. Over 286 to 638 (FQKRRTSHHL…YTEVFIGSTS (353 aa)) the chain is Cytoplasmic. Residues 321 to 609 (KLFSHTLGKG…VLEVPPKPSI (289 aa)) enclose the Protein kinase domain. ATP-binding positions include 327–335 (LGKGGFGTV) and Lys349. Tyr393 is subject to Phosphotyrosine. The active-site Proton acceptor is Asp444. Thr484 carries the phosphothreonine modification.

The protein belongs to the protein kinase superfamily. Ser/Thr protein kinase family.

Its subcellular location is the membrane. It catalyses the reaction L-seryl-[protein] + ATP = O-phospho-L-seryl-[protein] + ADP + H(+). It carries out the reaction L-threonyl-[protein] + ATP = O-phospho-L-threonyl-[protein] + ADP + H(+). This Arabidopsis thaliana (Mouse-ear cress) protein is LEAF RUST 10 DISEASE-RESISTANCE LOCUS RECEPTOR-LIKE PROTEIN KINASE-like 2.1.